The chain runs to 327 residues: Metal-binding protein YtgA (327 aa).

An N-terminal signal peptide occupies residues 1-20; sequence MDAKMGYIFKVMRWIFCFVA. Positions 73, 139, 205, and 297 each coordinate Fe(2+).

It belongs to the bacterial solute-binding protein 9 family. In terms of assembly, monomer.

The protein localises to the periplasm. Functionally, part of the ATP-binding cassette (ABC) transport system YtgABCD involved in metal import. Binds Fe(2+), Mn(2+) and Ni(2+), with a preference for Fe(2+) and delivers them to the membrane permease for translocation into the cytoplasm. The polypeptide is Metal-binding protein YtgA (Chlamydia pneumoniae (Chlamydophila pneumoniae)).